Here is a 341-residue protein sequence, read N- to C-terminus: Anthranilate phosphoribosyltransferase (341 aa).

5-phospho-alpha-D-ribose 1-diphosphate-binding positions include Gly-79, 82 to 83 (GD), Thr-87, 89 to 92 (NIST), 107 to 115 (KHGNRAVSS), and Ser-119. Gly-79 lines the anthranilate pocket. Ser-91 lines the Mg(2+) pocket. Asn-110 lines the anthranilate pocket. Position 165 (Arg-165) interacts with anthranilate. Positions 224 and 225 each coordinate Mg(2+).

It belongs to the anthranilate phosphoribosyltransferase family. In terms of assembly, homodimer. Mg(2+) serves as cofactor.

The enzyme catalyses N-(5-phospho-beta-D-ribosyl)anthranilate + diphosphate = 5-phospho-alpha-D-ribose 1-diphosphate + anthranilate. It functions in the pathway amino-acid biosynthesis; L-tryptophan biosynthesis; L-tryptophan from chorismate: step 2/5. Catalyzes the transfer of the phosphoribosyl group of 5-phosphorylribose-1-pyrophosphate (PRPP) to anthranilate to yield N-(5'-phosphoribosyl)-anthranilate (PRA). The protein is Anthranilate phosphoribosyltransferase of Bacillus cereus (strain ZK / E33L).